The chain runs to 504 residues: Potassium voltage-gated channel subfamily V member 1 (504 aa).

Disordered stretches follow at residues 1–22 (MDLS…GGSL) and 172–193 (KKDT…QGPC). At 1 to 214 (MDLSPRNRPL…EKPGSSTAAR (214 aa)) the chain is on the cytoplasmic side. A compositionally biased stretch (low complexity) spans 10–22 (LLESSSLDSGGSL). The segment covering 172 to 185 (KKDTDDQESQHESE) has biased composition (basic and acidic residues). Residues 215–235 (IFGVISIIFVAVSIVNMALMS) form a helical membrane-spanning segment. Residues 236–242 (AELSWLN) lie on the Extracellular side of the membrane. A helical membrane pass occupies residues 243-263 (LQLLEILEYVCISWFTGEFIL). Residues 264-280 (RFLCVKDRCRFLRKVPN) lie on the Cytoplasmic side of the membrane. A helical membrane pass occupies residues 281–301 (IIDLLAILPFYITLLVESLSG). Residues 302-313 (SHTTQELENVGR) are Extracellular-facing. A helical; Voltage-sensor membrane pass occupies residues 314–335 (LVQVLRLLRALRMLKLGRHSTG). At 336-349 (LRSLGMTITQCYEE) the chain is on the cytoplasmic side. Residues 350-370 (VGLLLLFLSVGISIFSTIEYF) form a helical membrane-spanning segment. Residues 396–401 (TVGYGD) carry the Selectivity filter motif. Residues 411-431 (IVAFMCILSGILVLALPIAII) traverse the membrane as a helical segment. At 432–504 (NDRFSACYFT…RSSGGDDFWF (73 aa)) the chain is on the cytoplasmic side.

Belongs to the potassium channel family. V (TC 1.A.1.2) subfamily. Kv8.1/KCNV1 sub-subfamily. Heteromultimer with KCNB1 and KCNB2. Interacts with KCNC4 and KCND1. As to expression, detected in brain, throughout layers II, IV and VI of the brain cortex. Detected in cerebellum and hippocampus, in the granule cell layer, Purkinje cell layer, pyramidal cell layer and dentate gyrus. Detected at lower levels in olfactory bulb, amygdala, thalamus, hypothalamus, midbrain and brainstem.

Its subcellular location is the cell membrane. In terms of biological role, potassium channel subunit that does not form functional channels by itself. Modulates KCNB1 and KCNB2 channel activity by shifting the threshold for inactivation to more negative values and by slowing the rate of inactivation. Can down-regulate the channel activity of KCNB1, KCNB2, KCNC4 and KCND1, possibly by trapping them in intracellular membranes. In Mesocricetus auratus (Golden hamster), this protein is Potassium voltage-gated channel subfamily V member 1 (KCNV1).